The chain runs to 241 residues: Small ribosomal subunit protein uS3 (241 aa).

The KH type-2 domain maps to 39-107 (MRKFVMDELK…ETHLNIVEVR (69 aa)). Positions 214–241 (ASERRALEGDAQGPASRDRDRDRRRDNA) are disordered. Basic and acidic residues predominate over residues 229-241 (SRDRDRDRRRDNA).

Belongs to the universal ribosomal protein uS3 family. Part of the 30S ribosomal subunit. Forms a tight complex with proteins S10 and S14.

Its function is as follows. Binds the lower part of the 30S subunit head. Binds mRNA in the 70S ribosome, positioning it for translation. The sequence is that of Small ribosomal subunit protein uS3 from Rhizobium rhizogenes (strain K84 / ATCC BAA-868) (Agrobacterium radiobacter).